The chain runs to 182 residues: ATP-dependent protease subunit HslV (182 aa).

T10 is an active-site residue. Na(+) contacts are provided by A164, C167, and T170.

It belongs to the peptidase T1B family. HslV subfamily. A double ring-shaped homohexamer of HslV is capped on each side by a ring-shaped HslU homohexamer. The assembly of the HslU/HslV complex is dependent on binding of ATP.

Its subcellular location is the cytoplasm. It catalyses the reaction ATP-dependent cleavage of peptide bonds with broad specificity.. Allosterically activated by HslU binding. Protease subunit of a proteasome-like degradation complex believed to be a general protein degrading machinery. This Chelativorans sp. (strain BNC1) protein is ATP-dependent protease subunit HslV.